A 346-amino-acid chain; its full sequence is Uroporphyrinogen decarboxylase (346 aa).

Substrate contacts are provided by residues 23 to 27 (RQAGR), Asp-73, Tyr-151, Ser-206, and His-321.

Belongs to the uroporphyrinogen decarboxylase family. In terms of assembly, homodimer.

Its subcellular location is the cytoplasm. It carries out the reaction uroporphyrinogen III + 4 H(+) = coproporphyrinogen III + 4 CO2. It participates in porphyrin-containing compound metabolism; protoporphyrin-IX biosynthesis; coproporphyrinogen-III from 5-aminolevulinate: step 4/4. In terms of biological role, catalyzes the decarboxylation of four acetate groups of uroporphyrinogen-III to yield coproporphyrinogen-III. The sequence is that of Uroporphyrinogen decarboxylase from Sulfurovum sp. (strain NBC37-1).